The sequence spans 94 residues: Large ribosomal subunit protein bL28 (94 aa).

This sequence belongs to the bacterial ribosomal protein bL28 family.

The polypeptide is Large ribosomal subunit protein bL28 (Hyphomonas neptunium (strain ATCC 15444)).